A 300-amino-acid polypeptide reads, in one-letter code: Acetaldehyde dehydrogenase (300 aa).

An NAD(+)-binding site is contributed by 10-13 (SGNI). The active-site Acyl-thioester intermediate is the C129. Residues 160–168 (SAGPGTRKN) and N271 each bind NAD(+).

This sequence belongs to the acetaldehyde dehydrogenase family.

The enzyme catalyses acetaldehyde + NAD(+) + CoA = acetyl-CoA + NADH + H(+). The polypeptide is Acetaldehyde dehydrogenase (Alkalilimnicola ehrlichii (strain ATCC BAA-1101 / DSM 17681 / MLHE-1)).